We begin with the raw amino-acid sequence, 211 residues long: ATP phosphoribosyltransferase (211 aa).

The protein belongs to the ATP phosphoribosyltransferase family. Short subfamily. As to quaternary structure, heteromultimer composed of HisG and HisZ subunits.

Its subcellular location is the cytoplasm. The catalysed reaction is 1-(5-phospho-beta-D-ribosyl)-ATP + diphosphate = 5-phospho-alpha-D-ribose 1-diphosphate + ATP. It functions in the pathway amino-acid biosynthesis; L-histidine biosynthesis; L-histidine from 5-phospho-alpha-D-ribose 1-diphosphate: step 1/9. Functionally, catalyzes the condensation of ATP and 5-phosphoribose 1-diphosphate to form N'-(5'-phosphoribosyl)-ATP (PR-ATP). Has a crucial role in the pathway because the rate of histidine biosynthesis seems to be controlled primarily by regulation of HisG enzymatic activity. In Pseudomonas aeruginosa (strain ATCC 15692 / DSM 22644 / CIP 104116 / JCM 14847 / LMG 12228 / 1C / PRS 101 / PAO1), this protein is ATP phosphoribosyltransferase (hisG).